We begin with the raw amino-acid sequence, 217 residues long: N-(5'-phosphoribosyl)anthranilate isomerase (217 aa).

The protein belongs to the TrpF family.

The catalysed reaction is N-(5-phospho-beta-D-ribosyl)anthranilate = 1-(2-carboxyphenylamino)-1-deoxy-D-ribulose 5-phosphate. It participates in amino-acid biosynthesis; L-tryptophan biosynthesis; L-tryptophan from chorismate: step 3/5. The chain is N-(5'-phosphoribosyl)anthranilate isomerase from Synechococcus sp. (strain ATCC 27144 / PCC 6301 / SAUG 1402/1) (Anacystis nidulans).